Here is a 184-residue protein sequence, read N- to C-terminus: Threonylcarbamoyl-AMP synthase (184 aa).

Positions 3-184 (AWFIQKAVSV…DAATGAILRQ (182 aa)) constitute a YrdC-like domain.

This sequence belongs to the SUA5 family. TsaC subfamily.

Its subcellular location is the cytoplasm. It catalyses the reaction L-threonine + hydrogencarbonate + ATP = L-threonylcarbamoyladenylate + diphosphate + H2O. Required for the formation of a threonylcarbamoyl group on adenosine at position 37 (t(6)A37) in tRNAs that read codons beginning with adenine. Catalyzes the conversion of L-threonine, HCO(3)(-)/CO(2) and ATP to give threonylcarbamoyl-AMP (TC-AMP) as the acyladenylate intermediate, with the release of diphosphate. This is Threonylcarbamoyl-AMP synthase from Hahella chejuensis (strain KCTC 2396).